A 411-amino-acid polypeptide reads, in one-letter code: Putative acid phosphatase 10 (411 aa).

The active-site Nucleophile is the H33. The active-site Proton donor is D313. An intrachain disulfide couples C379 to C385.

The protein belongs to the histidine acid phosphatase family.

The catalysed reaction is a phosphate monoester + H2O = an alcohol + phosphate. This is Putative acid phosphatase 10 (pho-10) from Caenorhabditis elegans.